A 243-amino-acid polypeptide reads, in one-letter code: CRISPR-associated endoribonuclease Cas6 (243 aa).

It belongs to the CRISPR-associated endoribonuclease Cas6 family. Part of the Csm effector complex that includes at least Cas10(1), Csm2(3), Csm3(5), Csm4(1); the presence of Csm5 and Cas6 may depend on the processing state of precursor crRNA. Csm with a precursor crRNA does not include Csm5, while Cas6, the enzyme probably involved in pre-crRNA processing, is found associated with a subset of the Csm complex that is probably in the process of pre-crRNA maturation. The Csm complex is elongated and slightly twisted with a maximal length of 215 Angstroms and a diameter of 75-80 Angstroms. It has been modeled to have a central protein filamant of Csm3 subunits along which the dsRNA helix of paired crRNA and target RNA binds. The filament is capped at one end by Cas10 and Csm4 and at the other end by Csm5; ssDNA is thought to bind to the N-terminal HD domain of Cas10.

CRISPR (clustered regularly interspaced short palindromic repeat) is an adaptive immune system that provides protection against mobile genetic elements (viruses, transposable elements and conjugative plasmids). CRISPR clusters contain spacers, sequences complementary to antecedent mobile elements, and target invading nucleic acids. CRISPR clusters are transcribed and processed into CRISPR RNA (crRNA). The type III-A Csm effector complex binds crRNA and acts as a crRNA-guided RNase, DNase and cyclic oligoadenylate synthase; binding of target RNA cognate to the crRNA is required for all activities. In a heterologous host this Csm effector complex restricts ssRNA phage MS2, suggesting it may target RNA viruses in vivo. Functionally, csm functions as a non-specific ssDNase. Base-pairing between crRNA and target RNA to form a ternary Csm complex activates a ssDNase activity; target RNA cleavage suppresses the ssDNase, a temporal control that prevents uncontrolled DNA degradation. Viral RNA transcripts probably tether the Csm complex to the viral genome, recruiting Cas10 ssDNA activity which is able to degrade DNA in the transcription bubble, spatially controlling the DNase activity. Its function is as follows. This protein processes pre-crRNA into individual crRNA units. In Streptococcus thermophilus, this protein is CRISPR-associated endoribonuclease Cas6.